A 504-amino-acid polypeptide reads, in one-letter code: Deoxyguanosinetriphosphate triphosphohydrolase (504 aa).

The 208-residue stretch at 66-273 (RLTHSLEVQQ…MEAADDISYC (208 aa)) folds into the HD domain.

This sequence belongs to the dGTPase family. Type 1 subfamily. In terms of assembly, homotetramer. Mg(2+) is required as a cofactor.

The enzyme catalyses dGTP + H2O = 2'-deoxyguanosine + triphosphate + H(+). Functionally, dGTPase preferentially hydrolyzes dGTP over the other canonical NTPs. This Klebsiella pneumoniae subsp. pneumoniae (strain ATCC 700721 / MGH 78578) protein is Deoxyguanosinetriphosphate triphosphohydrolase.